We begin with the raw amino-acid sequence, 295 residues long: UDP-N-acetylenolpyruvoylglucosamine reductase (295 aa).

The 166-residue stretch at 23–188 (KVGGPADFLA…ISAKFALKPG (166 aa)) folds into the FAD-binding PCMH-type domain. Arg-167 is a catalytic residue. Residue Ser-217 is the Proton donor of the active site. Glu-287 is an active-site residue.

It belongs to the MurB family. The cofactor is FAD.

The protein localises to the cytoplasm. It carries out the reaction UDP-N-acetyl-alpha-D-muramate + NADP(+) = UDP-N-acetyl-3-O-(1-carboxyvinyl)-alpha-D-glucosamine + NADPH + H(+). Its pathway is cell wall biogenesis; peptidoglycan biosynthesis. In terms of biological role, cell wall formation. This Streptococcus pyogenes serotype M18 (strain MGAS8232) protein is UDP-N-acetylenolpyruvoylglucosamine reductase.